The following is a 471-amino-acid chain: Regulator of microtubule dynamics protein 3 (471 aa).

The Mitochondrial intermembrane segment spans residues 1–12; that stretch reads MSRLGALGGSRA. The helical transmembrane segment at 13-35 threads the bilayer; it reads GLGLLLGTAAGLGFLCVLYSQRW. Topologically, residues 36–471 are cytoplasmic; the sequence is KRTQRHGRSQ…LEELEVILGK (436 aa). Phosphoserine is present on residues Ser44, Ser46, Ser50, and Ser57. The stretch at 91–125 forms a coiled coil; it reads LDRLDFVLTSLMALRREVEELQRSLQGLAGEIVGE. Residues 157–163 carry the FFAT motif; that stretch reads VYFTASS. Residue Thr160 is modified to Phosphothreonine. Residues 168–203 form a disordered region; that stretch reads TDAESEGGYTTANAESDYERDSDKESEDAEDEVSCE. A phosphoserine mark is found at Ser183, Ser193, Ser212, and Ser233. A compositionally biased stretch (acidic residues) spans 191–201; it reads KESEDAEDEVS.

It belongs to the RMDN family. Interacts with PTPN2. Interacts with microtubules. Interacts with VAPB. Interacts (via FFAT motif) with MOSPD2 (via MSP domain). Interacts (via phosphorylated FFAT motif) with MOSPD2, VAPA and VAPB. Phosphorylation at Thr-160 of the FFAT motif activates interaction with MOSPD2, VAPA and VAPB.

Its subcellular location is the mitochondrion outer membrane. The protein resides in the cytoplasm. The protein localises to the nucleus. It localises to the cytoskeleton. It is found in the spindle. Its subcellular location is the spindle pole. In terms of biological role, involved in cellular calcium homeostasis regulation. May participate in differentiation and apoptosis of keratinocytes. Overexpression induces apoptosis. This is Regulator of microtubule dynamics protein 3 from Rattus norvegicus (Rat).